Reading from the N-terminus, the 509-residue chain is Glycerol kinase (509 aa).

ADP is bound at residue T17. Residues T17, T18, and S19 each contribute to the ATP site. T17 contributes to the sn-glycerol 3-phosphate binding site. ADP is bound at residue R21. Sn-glycerol 3-phosphate is bound by residues R87, E88, Y139, and D256. 5 residues coordinate glycerol: R87, E88, Y139, D256, and Q257. ADP contacts are provided by T278 and G322. ATP-binding residues include T278, G322, Q326, and A423. Residues A423 and N427 each contribute to the ADP site.

This sequence belongs to the FGGY kinase family.

It carries out the reaction glycerol + ATP = sn-glycerol 3-phosphate + ADP + H(+). The protein operates within polyol metabolism; glycerol degradation via glycerol kinase pathway; sn-glycerol 3-phosphate from glycerol: step 1/1. With respect to regulation, inhibited by fructose 1,6-bisphosphate (FBP). Its function is as follows. Key enzyme in the regulation of glycerol uptake and metabolism. Catalyzes the phosphorylation of glycerol to yield sn-glycerol 3-phosphate. In Corynebacterium glutamicum (strain R), this protein is Glycerol kinase.